Consider the following 431-residue polypeptide: Keratin, type I cytoskeletal 20 (431 aa).

A disordered region spans residues methionine 1–methionine 23. The head stretch occupies residues methionine 1–asparagine 76. Serine 13 bears the Phosphoserine; by MAPKAPK2, MAPKAPK3 and PKC mark. 2 positions are modified to phosphoserine: serine 16 and serine 26. The coil 1A stretch occupies residues glycine 77–tryptophan 112. The region spanning glycine 77–threonine 388 is the IF rod domain. The tract at residues tyrosine 113–glutamine 130 is linker 1. The tract at residues isoleucine 131–leucine 222 is coil 1B. The linker 12 stretch occupies residues arginine 223–isoleucine 245. The tract at residues methionine 246–glutamate 384 is coil 2. Positions aspartate 385 to valine 431 are tail.

Belongs to the intermediate filament family. Heterotetramer of two type I and two type II keratins. Associates with KRT8. Post-translationally, hyperphosphorylation at Ser-13 occurs during the early stages of apoptosis but becomes less prominent during the later stages. Phosphorylation at Ser-13 also increases in response to stress brought on by cell injury. Proteolytically cleaved by caspases during apoptosis. Cleavage occurs at Asp-235. In terms of tissue distribution, expressed at low levels in the more differentiated suprabasal regions of the small intestine, and at higher levels in the colon, mainly in the upper region and in scattered cells throughout the remaining epithelium. Also expressed in epithelial cells of bladder, ileum and stomach and at lower levels in pancreas and earskin. The phosphorylated form is nearly exclusively expressed in goblet cells of the small intestine and in the lumen-proximal cells of the colon (at protein level). Also expressed in jejunum and duodenum.

Its function is as follows. Plays a significant role in maintaining keratin filament organization in intestinal epithelia. When phosphorylated, plays a role in the secretion of mucin in the small intestine. The protein is Keratin, type I cytoskeletal 20 of Mus musculus (Mouse).